The following is a 77-amino-acid chain: Large ribosomal subunit protein uL24 (77 aa).

Residues 42 to 61 (KKHQKPSQTNANGGVVESEG) are disordered.

The protein belongs to the universal ribosomal protein uL24 family. In terms of assembly, part of the 50S ribosomal subunit.

In terms of biological role, one of two assembly initiator proteins, it binds directly to the 5'-end of the 23S rRNA, where it nucleates assembly of the 50S subunit. Functionally, one of the proteins that surrounds the polypeptide exit tunnel on the outside of the subunit. The polypeptide is Large ribosomal subunit protein uL24 (Lactobacillus acidophilus (strain ATCC 700396 / NCK56 / N2 / NCFM)).